We begin with the raw amino-acid sequence, 545 residues long: Phenylalanine--tRNA ligase beta subunit (545 aa).

Residues 266 to 342 form the B5 domain; that stretch reads LSPALRNINV…IGAGFGNLEA (77 aa). The Mg(2+) site is built by Asp320, Asp326, Glu329, and Asp330.

It belongs to the phenylalanyl-tRNA synthetase beta subunit family. Type 2 subfamily. In terms of assembly, tetramer of two alpha and two beta subunits. Mg(2+) serves as cofactor.

It localises to the cytoplasm. It catalyses the reaction tRNA(Phe) + L-phenylalanine + ATP = L-phenylalanyl-tRNA(Phe) + AMP + diphosphate + H(+). This Methanospirillum hungatei JF-1 (strain ATCC 27890 / DSM 864 / NBRC 100397 / JF-1) protein is Phenylalanine--tRNA ligase beta subunit.